Here is a 29-residue protein sequence, read N- to C-terminus: Glucagon (29 aa).

This sequence belongs to the glucagon family.

It is found in the secreted. Its function is as follows. Glucagon plays a key role in glucose metabolism and homeostasis. Regulates blood glucose by increasing gluconeogenesis and decreasing glycolysis. The protein is Glucagon (gcg) of Lampetra fluviatilis (European river lamprey).